We begin with the raw amino-acid sequence, 235 residues long: Putative N-acetylmannosamine-6-phosphate 2-epimerase (235 aa).

This sequence belongs to the NanE family.

It catalyses the reaction an N-acyl-D-glucosamine 6-phosphate = an N-acyl-D-mannosamine 6-phosphate. Its pathway is amino-sugar metabolism; N-acetylneuraminate degradation; D-fructose 6-phosphate from N-acetylneuraminate: step 3/5. In terms of biological role, converts N-acetylmannosamine-6-phosphate (ManNAc-6-P) to N-acetylglucosamine-6-phosphate (GlcNAc-6-P). The chain is Putative N-acetylmannosamine-6-phosphate 2-epimerase from Edwardsiella ictaluri (strain 93-146).